Reading from the N-terminus, the 324-residue chain is Interactor of constitutive active ROPs 4 (324 aa).

Disordered regions lie at residues 1–74 (MPKP…SGLE), 91–156 (LAKA…ASKE), 175–201 (SLSE…KAKE), and 289–324 (FVGS…KGQK). Positions 13–28 (QRQSPRLRTSLLSTSS) are enriched in low complexity. Composition is skewed to basic and acidic residues over residues 29–50 (DPHH…DRRS), 95–106 (EAAKKRAQEELH), and 118–156 (PERD…ASKE). Positions 62–266 (SQKKLGSRIS…ADAAAAVLSG (205 aa)) form a coiled coil. Residues 313 to 324 (MFGDLWKKKGQK) show a composition bias toward basic and acidic residues.

Belongs to the ICR family. As to quaternary structure, interacts with ARAC11 in vitro.

Acts as a scaffold, mediating interaction of ROPs with different proteins. This chain is Interactor of constitutive active ROPs 4 (ICR4), found in Arabidopsis thaliana (Mouse-ear cress).